The following is a 193-amino-acid chain: uncharacterized protein (193 aa).

This is an uncharacterized protein from Dictyostelium discoideum (Social amoeba).